A 554-amino-acid chain; its full sequence is Rab GTPase-binding effector protein 2 (554 aa).

The span at 1–15 (MAAAPAALALDPQPQ) shows a compositional bias: low complexity. Disordered regions lie at residues 1-29 (MAAA…ELSR), 167-250 (IQRR…ETAS), and 375-395 (EQLP…DEAL). The stretch at 15–173 (QEEQKDASES…IQEIQRRPRQ (159 aa)) forms a coiled coil. Basic and acidic residues predominate over residues 16–29 (EEQKDASESSELSR). 4 positions are modified to phosphoserine: serine 176, serine 180, serine 187, and serine 191. A coiled-coil region spans residues 274–512 (DSQWEQLQVE…LETSEQVQRD (239 aa)). The span at 377–386 (LPSSALQGSE) shows a compositional bias: polar residues.

This sequence belongs to the rabaptin family. As to quaternary structure, heterodimer with RABGEF1. The dimer binds RAB5A that has been activated by GTP-binding. Interacts with SDCCAG8; this interaction is important for ciliogenesis regulation. Interacts with RAB4A; this interaction may mediate VEGFR2 cell surface expression.

The protein localises to the cytoplasm. It localises to the early endosome. It is found in the cytoskeleton. The protein resides in the microtubule organizing center. Its subcellular location is the centrosome. The protein localises to the cilium basal body. In terms of biological role, plays a role in membrane trafficking and in homotypic early endosome fusion. Participates in arteriogenesis by regulating vascular endothelial growth factor receptor 2/VEGFR2 cell surface expression and endosomal trafficking. By interacting with SDCCAG8, localizes to centrosomes and plays a critical role in ciliogenesis. This chain is Rab GTPase-binding effector protein 2 (Rabep2), found in Rattus norvegicus (Rat).